A 241-amino-acid chain; its full sequence is Antimicrobial ginkbilobin-2-like protein (241 aa).

Positions 1–23 (MLSSKYISVSFLLLSLSLHAVNC) are cleaved as a signal peptide. Gnk2-homologous domains are found at residues 25 to 127 (DPLY…NIDF) and 133 to 238 (NKNK…LYPF). 4 disulfides stabilise this stretch: Cys-81/Cys-90, Cys-93/Cys-118, Cys-192/Cys-201, and Cys-204/Cys-229. Asn-89 carries N-linked (GlcNAc...) asparagine glycosylation.

Belongs to the cysteine-rich repeat secretory protein family.

It is found in the secreted. Functionally, possesses antimicrobial activity toward the oomycete Phytophthora cinnamomi (ink disease agent), thus reducing its growth rate and confering an increased resistance to the plant. The chain is Antimicrobial ginkbilobin-2-like protein from Castanea crenata (Japanese chestnut).